Reading from the N-terminus, the 280-residue chain is Pantothenate synthetase (280 aa).

31-38 (MGNLHAGH) lines the ATP pocket. The active-site Proton donor is His-38. A (R)-pantoate-binding site is contributed by Gln-62. Gln-62 is a beta-alanine binding site. 150–153 (GKKD) contacts ATP. Gln-156 serves as a coordination point for (R)-pantoate. ATP is bound by residues Val-179 and 187 to 190 (MSSR).

The protein belongs to the pantothenate synthetase family. In terms of assembly, homodimer.

The protein localises to the cytoplasm. The enzyme catalyses (R)-pantoate + beta-alanine + ATP = (R)-pantothenate + AMP + diphosphate + H(+). It functions in the pathway cofactor biosynthesis; (R)-pantothenate biosynthesis; (R)-pantothenate from (R)-pantoate and beta-alanine: step 1/1. In terms of biological role, catalyzes the condensation of pantoate with beta-alanine in an ATP-dependent reaction via a pantoyl-adenylate intermediate. The polypeptide is Pantothenate synthetase (Xanthomonas euvesicatoria pv. vesicatoria (strain 85-10) (Xanthomonas campestris pv. vesicatoria)).